The primary structure comprises 161 residues: MENEPDTICILVDADACPVKAEIYRVAERHNLPVVIVANSFIAIPREAQRVERVVVSGNLDAADDWIAEHSRPGAVVVTADIPLASRALEKGASVIAPNGRIHTQSTIGNTLAARNLMDSLRSAGEVTGGPAPFAPKDRSAFLSALDLAIVRLKRAGFHAS.

It belongs to the UPF0178 family.

The sequence is that of UPF0178 protein BSUIS_A1819 from Brucella suis (strain ATCC 23445 / NCTC 10510).